A 284-amino-acid chain; its full sequence is Large ribosomal subunit protein uL2 (284 aa).

A disordered region spans residues 232–284; it reads RGTAMNPVDHPHGGGEGRHNGYIPRTPWGKVTKGLKTRDKRKSNKWIVKDRRK. Residues 240–250 are compositionally biased toward basic and acidic residues; sequence DHPHGGGEGRH. Positions 264 to 284 are enriched in basic residues; it reads KGLKTRDKRKSNKWIVKDRRK.

This sequence belongs to the universal ribosomal protein uL2 family. In terms of assembly, part of the 50S ribosomal subunit. Forms a bridge to the 30S subunit in the 70S ribosome.

In terms of biological role, one of the primary rRNA binding proteins. Required for association of the 30S and 50S subunits to form the 70S ribosome, for tRNA binding and peptide bond formation. It has been suggested to have peptidyltransferase activity; this is somewhat controversial. Makes several contacts with the 16S rRNA in the 70S ribosome. This is Large ribosomal subunit protein uL2 from Chlamydia abortus (strain DSM 27085 / S26/3) (Chlamydophila abortus).